A 105-amino-acid chain; its full sequence is Cell division protein FtsB (105 aa).

The Cytoplasmic segment spans residues 1–3 (MGK). Residues 4–21 (LTLLLLVLLGWLQYSLWL) form a helical membrane-spanning segment. The Periplasmic segment spans residues 22 to 105 (GKNGVHDLVR…PAAPATQDNQ (84 aa)). Residues 28-62 (DLVRVESDVAAQQSNNAQLKARNDQLFAEIDDLNG) are a coiled coil.

This sequence belongs to the FtsB family. Part of a complex composed of FtsB, FtsL and FtsQ.

Its subcellular location is the cell inner membrane. Essential cell division protein. May link together the upstream cell division proteins, which are predominantly cytoplasmic, with the downstream cell division proteins, which are predominantly periplasmic. The polypeptide is Cell division protein FtsB (Sodalis glossinidius (strain morsitans)).